The following is a 356-amino-acid chain: Glucose 1-dehydrogenase 2 (356 aa).

Zn(2+) is bound at residue Asp38. Ser40 contacts substrate. Residues His64 and Glu65 each coordinate Zn(2+). Residues Glu114 and Glu150 each contribute to the substrate site. Glu150 is a binding site for Zn(2+). NADP(+) is bound by residues 181 to 184 (NGNL), 206 to 207 (RR), and 301 to 303 (VVN). Asn303 is a substrate binding site.

It belongs to the zinc-containing alcohol dehydrogenase family. Glucose 1-dehydrogenase subfamily. Zn(2+) serves as cofactor.

It carries out the reaction D-glucose + NAD(+) = D-glucono-1,5-lactone + NADH + H(+). It catalyses the reaction D-glucose + NADP(+) = D-glucono-1,5-lactone + NADPH + H(+). Its function is as follows. Catalyzes the NAD(P)(+)-dependent oxidation of D-glucose to D-gluconate via gluconolactone. Can utilize both NAD(+) and NADP(+) as electron acceptor. Is involved in the degradation of glucose through a modified Entner-Doudoroff pathway. The protein is Glucose 1-dehydrogenase 2 of Haloterrigena turkmenica (strain ATCC 51198 / DSM 5511 / JCM 9101 / NCIMB 13204 / VKM B-1734 / 4k) (Halococcus turkmenicus).